Reading from the N-terminus, the 240-residue chain is Phosphoribosylaminoimidazole-succinocarboxamide synthase (240 aa).

Belongs to the SAICAR synthetase family.

It catalyses the reaction 5-amino-1-(5-phospho-D-ribosyl)imidazole-4-carboxylate + L-aspartate + ATP = (2S)-2-[5-amino-1-(5-phospho-beta-D-ribosyl)imidazole-4-carboxamido]succinate + ADP + phosphate + 2 H(+). It functions in the pathway purine metabolism; IMP biosynthesis via de novo pathway; 5-amino-1-(5-phospho-D-ribosyl)imidazole-4-carboxamide from 5-amino-1-(5-phospho-D-ribosyl)imidazole-4-carboxylate: step 1/2. The protein is Phosphoribosylaminoimidazole-succinocarboxamide synthase of Limosilactobacillus fermentum (strain NBRC 3956 / LMG 18251) (Lactobacillus fermentum).